Reading from the N-terminus, the 650-residue chain is Acetyl-coenzyme A synthetase (650 aa).

CoA contacts are provided by residues 191–194, Thr-311, and Asn-335; that span reads RGGR. ATP contacts are provided by residues 387-389, 411-416, Asp-500, and Arg-515; these read GEP and DTWWQT. A CoA-binding site is contributed by Ser-523. Arg-526 contacts ATP. Val-537, His-539, and Val-542 together coordinate Mg(2+). Arg-584 provides a ligand contact to CoA. N6-acetyllysine is present on Lys-609.

The protein belongs to the ATP-dependent AMP-binding enzyme family. Requires Mg(2+) as cofactor. Post-translationally, acetylated. Deacetylation by the SIR2-homolog deacetylase activates the enzyme.

It carries out the reaction acetate + ATP + CoA = acetyl-CoA + AMP + diphosphate. Functionally, catalyzes the conversion of acetate into acetyl-CoA (AcCoA), an essential intermediate at the junction of anabolic and catabolic pathways. AcsA undergoes a two-step reaction. In the first half reaction, AcsA combines acetate with ATP to form acetyl-adenylate (AcAMP) intermediate. In the second half reaction, it can then transfer the acetyl group from AcAMP to the sulfhydryl group of CoA, forming the product AcCoA. The protein is Acetyl-coenzyme A synthetase of Shewanella frigidimarina (strain NCIMB 400).